Reading from the N-terminus, the 429-residue chain is Fumarylacetoacetase (429 aa).

Ca(2+) is bound at residue Asp139. Catalysis depends on His146, which acts as the Proton acceptor. Arg155 provides a ligand contact to substrate. Ca(2+) is bound by residues Glu212, Glu214, and Asp246. Residue Asp246 coordinates Mg(2+). Substrate is bound at residue Gln253. Residues Lys266 and Thr270 each contribute to the Mg(2+) site. Position 363 (Thr363) interacts with substrate.

Belongs to the FAH family. The cofactor is Ca(2+). It depends on Mg(2+) as a cofactor.

It catalyses the reaction 4-fumarylacetoacetate + H2O = acetoacetate + fumarate + H(+). The protein operates within amino-acid degradation; L-phenylalanine degradation; acetoacetate and fumarate from L-phenylalanine: step 6/6. Functionally, converts fumarylacetoacetate to acetoacetate and fumarate. Involved in tyrosine catabolic pathway. Catalyzes the final step in the tyrosine degradation pathway. The polypeptide is Fumarylacetoacetase (Oryza sativa subsp. japonica (Rice)).